The primary structure comprises 146 residues: Cytochrome b5 type B (146 aa).

The propeptide occupies 1–11 (MATPEASGSGR). The 77-residue stretch at 20–96 (VTYYRLEEVA…LKQYYIGDVH (77 aa)) folds into the Cytochrome b5 heme-binding domain. At Lys30 the chain carries N6-acetyllysine. Heme-binding residues include His55 and His79. Ser80 bears the Phosphoserine mark. Residues 119–136 (WAYWIVPIVGAILIGFLY) form a helical membrane-spanning segment.

It belongs to the cytochrome b5 family. In terms of assembly, component of a complex composed of cytochrome b5, NADH-cytochrome b5 reductase (CYB5R3) and MTARC2.

Its subcellular location is the mitochondrion outer membrane. In terms of biological role, cytochrome b5 is a membrane-bound hemoprotein functioning as an electron carrier for several membrane-bound oxygenases. The chain is Cytochrome b5 type B (Cyb5b) from Rattus norvegicus (Rat).